Consider the following 55-residue polypeptide: Large ribosomal subunit protein bL33 (55 aa).

This sequence belongs to the bacterial ribosomal protein bL33 family.

The sequence is that of Large ribosomal subunit protein bL33 from Methylocella silvestris (strain DSM 15510 / CIP 108128 / LMG 27833 / NCIMB 13906 / BL2).